A 98-amino-acid polypeptide reads, in one-letter code: Integration host factor subunit alpha (98 aa).

A disordered region spans residues 49–71 (FGNFDLRDKNQRPGRNPKTGEDI).

It belongs to the bacterial histone-like protein family. Heterodimer of an alpha and a beta chain.

In terms of biological role, this protein is one of the two subunits of integration host factor, a specific DNA-binding protein that functions in genetic recombination as well as in transcriptional and translational control. This Shewanella halifaxensis (strain HAW-EB4) protein is Integration host factor subunit alpha.